The chain runs to 111 residues: V-type proton ATPase subunit G 2 (111 aa).

The protein belongs to the V-ATPase G subunit family. In terms of assembly, V-ATPase is a heteromultimeric enzyme composed of a peripheral catalytic V1 complex (components A to H) attached to an integral membrane V0 proton pore complex (components: a, c, c', c'' and d).

Catalytic subunit of the peripheral V1 complex of vacuolar ATPase (V-ATPase). V-ATPase is responsible for acidifying a variety of intracellular compartments in eukaryotic cells. In Nicotiana tabacum (Common tobacco), this protein is V-type proton ATPase subunit G 2 (VATG2).